Consider the following 508-residue polypeptide: Photosystem II CP47 reaction center protein (508 aa).

Transmembrane regions (helical) follow at residues 21-36 (SVHIMHTALVAGWAGS), 101-115 (IMFSGLMFLAAIWHW), 140-156 (GIHLFLSGVACFGFGAF), 203-218 (IAAGILGILAGLFHLS), 237-252 (VLSSSIAAVFFAAFIV), and 457-472 (TFALLFFSGHIWHGAR).

The protein belongs to the PsbB/PsbC family. PsbB subfamily. In terms of assembly, PSII is composed of 1 copy each of membrane proteins PsbA, PsbB, PsbC, PsbD, PsbE, PsbF, PsbH, PsbI, PsbJ, PsbK, PsbL, PsbM, PsbT, PsbX, PsbY, PsbZ, Psb30/Ycf12, at least 3 peripheral proteins of the oxygen-evolving complex and a large number of cofactors. It forms dimeric complexes. It depends on Binds multiple chlorophylls. PSII binds additional chlorophylls, carotenoids and specific lipids. as a cofactor.

It localises to the plastid. The protein resides in the chloroplast thylakoid membrane. Its function is as follows. One of the components of the core complex of photosystem II (PSII). It binds chlorophyll and helps catalyze the primary light-induced photochemical processes of PSII. PSII is a light-driven water:plastoquinone oxidoreductase, using light energy to abstract electrons from H(2)O, generating O(2) and a proton gradient subsequently used for ATP formation. This chain is Photosystem II CP47 reaction center protein, found in Pinus koraiensis (Korean pine).